Here is a 223-residue protein sequence, read N- to C-terminus: RNA-free ribonuclease P (223 aa).

This sequence belongs to the HARP family.

It catalyses the reaction Endonucleolytic cleavage of RNA, removing 5'-extranucleotides from tRNA precursor.. Its function is as follows. RNA-free RNase P that catalyzes the removal of the 5'-leader sequence from pre-tRNA to produce the mature 5'-terminus. This chain is RNA-free ribonuclease P, found in Methanococcus maripaludis (strain DSM 14266 / JCM 13030 / NBRC 101832 / S2 / LL).